Consider the following 337-residue polypeptide: 1,4-dihydroxy-2-naphthoyl-CoA synthase, peroxisomal (337 aa).

Substrate contacts are provided by residues 97-98 (RR), K133, 137-141 (SGGDQ), 181-185 (YAVGG), T207, and S213. Position 206–208 (206–208 (QTG)) interacts with hydrogencarbonate.

It belongs to the enoyl-CoA hydratase/isomerase family. MenB subfamily. As to quaternary structure, homohexamer. It depends on hydrogencarbonate as a cofactor.

The protein localises to the peroxisome. The catalysed reaction is 2-succinylbenzoyl-CoA + H(+) = 1,4-dihydroxy-2-naphthoyl-CoA + H2O. Functionally, involved in the biosynthesis of phylloquinone (vitamin K1). Converts o-succinylbenzoyl-CoA (OSB-CoA) to 1,4-dihydroxy-2-naphthoyl-CoA (DHNA-CoA). In Arabidopsis thaliana (Mouse-ear cress), this protein is 1,4-dihydroxy-2-naphthoyl-CoA synthase, peroxisomal (MENB).